The chain runs to 518 residues: MSCVKLWPSGAPAPLVSIEELENQELVGKGGFGTVFRAQHRKWGYDVAVKIVNSKAISREVKAMASLDNEFVLRLEGVIEKVNWDQDPKPALVTKFMENGSLSGLLQSQCPRPWPLLCRLLKEVVLGMFYLHDQNPVLLHRDLKPSNVLLDPELHVKLADFGLSTFQGGSQSGTGSGEPGGTLGYLAPELFVNVNRKASTASDVYSFGILMWAVLAGREVELPTEPSLVYEAVCNRQNRPSLAELPQAGPETPGLEGLKELMQLCWSSEPKDRPSFQECLPKTDEVFQMVENNMNAAVSTVKDFLSQLRSSNRRFSIPESGQGGTEMDGFRRTIENQHSRNDVMVSEWLNKLNLEEPPSSVPKKCPSLTKRSRAQEEQVPQAWTAGTSSDSMAQPPQTPETSTFRNQMPSPTSTGTPSPGPRGNQGAERQGMNWSCRTPEPNPVTGRPLVNIYNCSGVQVGDNNYLTMQQTTALPTWGLAPSGKGRGLQHPPPVGSQEGPKDPEAWSRPQGWYNHSGK.

Ser-2 is modified (phosphoserine). The 267-residue stretch at Leu-21–Phe-287 folds into the Protein kinase domain. ATP is bound at residue Val-27–Val-35. Lys-42 participates in a covalent cross-link: Glycyl lysine isopeptide (Lys-Gly) (interchain with G-Cter in ubiquitin). Lys-50 provides a ligand contact to ATP. The active-site Proton acceptor is the Asp-142. Ser-164 carries the phosphoserine modification. Thr-182 carries the phosphothreonine modification. Ser-199 and Ser-227 each carry phosphoserine; by autocatalysis. A Phosphothreonine modification is found at Thr-252. A Phosphoserine modification is found at Ser-299. Phosphothreonine is present on Thr-333. Residues Lys-351 and Lys-363 each participate in a glycyl lysine isopeptide (Lys-Gly) (interchain with G-Cter in ubiquitin) cross-link. The interval Glu-355–Pro-443 is disordered. The span at Thr-384–Met-408 shows a compositional bias: polar residues. Ser-389 carries the phosphoserine modification. The residue at position 401 (Thr-401) is a Phosphothreonine. Positions Val-450 to Leu-466 match the RIP homotypic interaction motif (RHIM) motif. Residues Thr-476–Lys-518 form a disordered region. Residue Lys-518 forms a Glycyl lysine isopeptide (Lys-Gly) (interchain with G-Cter in ubiquitin) linkage.

Belongs to the protein kinase superfamily. TKL Ser/Thr protein kinase family. In terms of assembly, interacts (via RIP homotypic interaction motif) with RIPK1 (via RIP homotypic interaction motif); this interaction induces RIPK1 phosphorylation and formation of a RIPK1-RIPK3 necrosis-inducing complex. Interacts with MLKL; the interaction is direct and triggers necroptosis. Interacts with ZBP1 (via RIP homotypic interaction motif); interaction with ZBP1 activates RIPK3, triggering necroptosis. Upon TNF-induced necrosis, the RIPK1-RIPK3 dimer further interacts with PGAM5 and MLKL; the formation of this complex leads to PGAM5 phosphorylation and increase in PGAM5 phosphatase activity. Binds TRAF2 and is recruited to the TNFR-1 signaling complex. Interacts with PYGL, GLUL and GLUD1; these interactions result in activation of these metabolic enzymes. Interacts with BIRC2/c-IAP1, BIRC3/c-IAP2 and XIAP/BIRC4. Interacts with ARHGEF2. Interacts with PELI1 (via atypical FHA domain); the phosphorylated form at Thr-182 binds preferentially to PELI1. Interacts with BUB1B, TRAF2 and STUB1. Interacts with CASP6. Component of the AIM2 PANoptosome complex, a multiprotein complex that drives inflammatory cell death (PANoptosis). (Microbial infection) Interacts (via RIP homotypic interaction motif/RHIM) with herpes simplex virus 1/HHV-1 protein RIR1/ICP6 (via RHIM); this interaction may induce heteromeric amyloid assemblies and prevent necroptosis activation. As to quaternary structure, (Microbial infection) Interacts (via RIP homotypic interaction motif/RHIM) with herpes simplex virus 2/HHV-2 protein RIR1/ICP10 (via RHIM); this interaction prevents necroptosis activation. In terms of processing, (Microbial infection) Proteolytically cleaved by S.flexneri OspD3 within the RIP homotypic interaction motif (RHIM), leading to its degradation and inhibition of necroptosis. RIPK1 and RIPK3 undergo reciprocal auto- and trans-phosphorylation. Autophosphorylated following interaction with ZBP1. Phosphorylation of Ser-199 plays a role in the necroptotic function of RIPK3. Autophosphorylates at Ser-227 following activation by ZBP1: phosphorylation at these sites is a hallmark of necroptosis and is required for binding MLKL. Phosphorylation at Thr-182 is important for its kinase activity, interaction with PELI1 and PELI1-mediated 'Lys-48'-linked polyubiquitination and for its ability to mediate TNF-induced necroptosis. Post-translationally, polyubiquitinated with 'Lys-48' and 'Lys-63'-linked chains by BIRC2/c-IAP1 and BIRC3/c-IAP2, leading to activation of NF-kappa-B. Polyubiquitinated with 'Lys-48'-linked chains by PELI1 leading to its subsequent proteasome-dependent degradation. Ubiquitinated by STUB1 leading to its subsequent proteasome-dependent degradation. Deubiquitinated by USP22. Highly expressed in the pancreas. Detected at lower levels in heart, placenta, lung and kidney. In terms of tissue distribution, expression is significantly increased in colon and lung cancers.

The protein localises to the cytoplasm. It localises to the cytosol. It is found in the nucleus. The enzyme catalyses L-seryl-[protein] + ATP = O-phospho-L-seryl-[protein] + ADP + H(+). The catalysed reaction is L-threonyl-[protein] + ATP = O-phospho-L-threonyl-[protein] + ADP + H(+). Its activity is regulated as follows. Activity is stimulated by ZBP1, which senses double-stranded Z-RNA structures. RIPK3-dependent necroptosis is inhibited by RIPK1: RIPK1 prevents the ZBP1-induced activation of RIPK3 via FADD-mediated recruitment of CASP8, which cleaves RIPK1 and limits TNF-induced necroptosis. In terms of biological role, serine/threonine-protein kinase that activates necroptosis and apoptosis, two parallel forms of cell death. Necroptosis, a programmed cell death process in response to death-inducing TNF-alpha family members, is triggered by RIPK3 following activation by ZBP1. Activated RIPK3 forms a necrosis-inducing complex and mediates phosphorylation of MLKL, promoting MLKL localization to the plasma membrane and execution of programmed necrosis characterized by calcium influx and plasma membrane damage. In addition to TNF-induced necroptosis, necroptosis can also take place in the nucleus in response to orthomyxoviruses infection: following ZBP1 activation, which senses double-stranded Z-RNA structures, nuclear RIPK3 catalyzes phosphorylation and activation of MLKL, promoting disruption of the nuclear envelope and leakage of cellular DNA into the cytosol. Also regulates apoptosis: apoptosis depends on RIPK1, FADD and CASP8, and is independent of MLKL and RIPK3 kinase activity. Phosphorylates RIPK1: RIPK1 and RIPK3 undergo reciprocal auto- and trans-phosphorylation. In some cell types, also able to restrict viral replication by promoting cell death-independent responses. In response to Zika virus infection in neurons, promotes a cell death-independent pathway that restricts viral replication: together with ZBP1, promotes a death-independent transcriptional program that modifies the cellular metabolism via up-regulation expression of the enzyme ACOD1/IRG1 and production of the metabolite itaconate. Itaconate inhibits the activity of succinate dehydrogenase, generating a metabolic state in neurons that suppresses replication of viral genomes. RIPK3 binds to and enhances the activity of three metabolic enzymes: GLUL, GLUD1, and PYGL. These metabolic enzymes may eventually stimulate the tricarboxylic acid cycle and oxidative phosphorylation, which could result in enhanced ROS production. Its function is as follows. (Microbial infection) In case of herpes simplex virus 1/HHV-1 infection, forms heteromeric amyloid structures with HHV-1 protein RIR1/ICP6 which may inhibit RIPK3-mediated necroptosis, thereby preventing host cell death pathway and allowing viral evasion. The chain is Receptor-interacting serine/threonine-protein kinase 3 from Homo sapiens (Human).